The chain runs to 1135 residues: Large proline-rich protein bag6-A (1135 aa).

In terms of domain architecture, Ubiquitin-like spans 7 to 82 (MEVTVKTLDS…HLVERAPPQT (76 aa)). Disordered regions lie at residues 76–114 (ERAP…RNGN), 194–238 (EQAA…SPSE), 350–407 (TGNG…PHPR), 498–522 (SFQF…VPGA), 552–612 (QGGS…QHLS), 661–698 (PVST…ESLP), 1075–1099 (KATG…EAQG), and 1116–1135 (NESY…RGDP). Over residues 79–100 (PPQTQPSTGGPSTSSSTSPTSS) the composition is skewed to low complexity. Positions 212 to 227 (RETLPQTTQNTDGQSN) are enriched in polar residues. Residues 228–237 (TTPTSHPSPS) show a composition bias toward low complexity. A compositionally biased stretch (polar residues) spans 367–387 (QPPSTNTSEPQRPNTENQPPS). Composition is skewed to low complexity over residues 555 to 600 (SSTS…SVPS) and 663 to 672 (STAPTQSASQ). Residues 673–692 (APPPSSPPPPPAHSSPPPAA) are compositionally biased toward pro residues. Over residues 1087–1099 (CVRRELDNSEAQG) the composition is skewed to basic and acidic residues. Residues 1116 to 1129 (NESYSAQRFPNTQR) show a composition bias toward polar residues.

In terms of assembly, component of the bag6/bat3 complex.

It localises to the cytoplasm. Its subcellular location is the cytosol. It is found in the nucleus. The protein localises to the secreted. The protein resides in the extracellular exosome. Its function is as follows. ATP-independent molecular chaperone preventing the aggregation of misfolded and hydrophobic patches-containing proteins. Functions as part of a cytosolic protein quality control complex, the bag6/bat3 complex, which maintains these client proteins in a soluble state and participates in their proper delivery to the endoplasmic reticulum or alternatively can promote their sorting to the proteasome where they undergo degradation. The bag6/bat3 complex is involved in the post-translational delivery of tail-anchored/type II transmembrane proteins to the endoplasmic reticulum membrane. Similarly, the bag6/bat3 complex also functions as a sorting platform for proteins of the secretory pathway that are mislocalized to the cytosol either delivering them to the proteasome for degradation or to the endoplasmic reticulum. The bag6/bat3 complex also plays a role in the endoplasmic reticulum-associated degradation (ERAD), a quality control mechanism that eliminates unwanted proteins of the endoplasmic reticulum through their retrotranslocation to the cytosol and their targeting to the proteasome. It maintains these retrotranslocated proteins in an unfolded yet soluble state condition in the cytosol to ensure their proper delivery to the proteasome. Also required for selective ubiquitin-mediated degradation of defective nascent chain polypeptides by the proteasome. Also involved in endoplasmic reticulum stress-induced pre-emptive quality control, a mechanism that selectively attenuates the translocation of newly synthesized proteins into the endoplasmic reticulum and reroutes them to the cytosol for proteasomal degradation. May ensure the proper degradation of these proteins and thereby protects the endoplasmic reticulum from protein overload upon stress. By stabilizing a large spectrum of proteins, may indirectly affect different biological processes including apoptosis. By controlling the steady-state expression of the IGF1R receptor, indirectly regulates the insulin-like growth factor receptor signaling pathway. When nuclear, may also act as a component of some chromatin regulator complex. The protein is Large proline-rich protein bag6-A of Xenopus laevis (African clawed frog).